The chain runs to 333 residues: DNA-directed RNA polymerase subunit alpha (333 aa).

The segment at 1–234 (MQSSVNEFLT…QQLAAFVDLK (234 aa)) is alpha N-terminal domain (alpha-NTD). The interval 248–333 (IDPILLRPVD…SLKKDDKATA (86 aa)) is alpha C-terminal domain (alpha-CTD).

This sequence belongs to the RNA polymerase alpha chain family. As to quaternary structure, homodimer. The RNAP catalytic core consists of 2 alpha, 1 beta, 1 beta' and 1 omega subunit. When a sigma factor is associated with the core the holoenzyme is formed, which can initiate transcription.

It catalyses the reaction RNA(n) + a ribonucleoside 5'-triphosphate = RNA(n+1) + diphosphate. Its function is as follows. DNA-dependent RNA polymerase catalyzes the transcription of DNA into RNA using the four ribonucleoside triphosphates as substrates. The polypeptide is DNA-directed RNA polymerase subunit alpha (Stutzerimonas stutzeri (strain A1501) (Pseudomonas stutzeri)).